A 619-amino-acid polypeptide reads, in one-letter code: Chaperone protein HscA homolog (619 aa).

The protein belongs to the heat shock protein 70 family.

Its function is as follows. Chaperone involved in the maturation of iron-sulfur cluster-containing proteins. Has a low intrinsic ATPase activity which is markedly stimulated by HscB. The protein is Chaperone protein HscA homolog of Shewanella amazonensis (strain ATCC BAA-1098 / SB2B).